A 1383-amino-acid polypeptide reads, in one-letter code: Insulin receptor (1383 aa).

Positions 1–26 are cleaved as a signal peptide; that stretch reads MGSGRGCETTAVPLLMAVAVAGGTAG. Extracellular segments follow at residues 27–759 and 764–957; these read HLYP…TRPS and SLEE…NIAK. Cys34 and Cys52 are joined by a disulfide. Asn42, Asn51, Asn104, and Asn137 each carry an N-linked (GlcNAc...) asparagine glycan. 9 cysteine pairs are disulfide-bonded: Cys152–Cys181, Cys185–Cys208, Cys195–Cys214, Cys218–Cys227, Cys222–Cys233, Cys234–Cys242, Cys238–Cys251, Cys254–Cys263, and Cys267–Cys279. N-linked (GlcNAc...) asparagine glycosylation is present at Asn241. Residue Asn281 is glycosylated (N-linked (GlcNAc...) asparagine). 5 disulfide bridges follow: Cys285–Cys310, Cys292–Cys300, Cys314–Cys327, Cys330–Cys334, and Cys338–Cys359. Asn321 carries an N-linked (GlcNAc...) asparagine glycan. Asn363 carries an N-linked (GlcNAc...) asparagine glycan. Ser399 carries the post-translational modification Phosphoserine. Tyr400 is modified (phosphotyrosine). Phosphoserine is present on Ser406. N-linked (GlcNAc...) asparagine glycosylation is found at Asn423 and Asn444. The cysteines at positions 461 and 494 are disulfide-linked. N-linked (GlcNAc...) asparagine glycans are attached at residues Asn540, Asn634, Asn652, and Asn699. A Fibronectin type-III 1 domain is found at 625–727; the sequence is VPLDPISVSN…SQILKELEES (103 aa). Cys675 and Cys900 are oxidised to a cystine. A disordered region spans residues 687-709; sequence SPPFESDDSQKHNQSEYDDSASE. Residues 734–742 form an insulin-binding region; the sequence is EDYLHNVVF. A disordered region spans residues 747-783; it reads TSSGNGAEDTRPSRKRRSLEEVGNVTATTPTLPDFPN. Fibronectin type-III domains are found at residues 754-848 and 854-948; these read EDTR…TMPE and IVGP…VTDY. N-linked (GlcNAc...) asparagine glycosylation is found at Asn770, Asn783, Asn921, and Asn934. Over residues 771 to 783 the composition is skewed to polar residues; that stretch reads VTATTPTLPDFPN. A helical transmembrane segment spans residues 958–978; sequence IIIGPLIFVFLFSVVIGSIYL. Over 979–1383 the chain is Cytoplasmic; sequence FLRKRQPDGP…VLTLPRSNPS (405 aa). The segment at 997 to 1000 is important for interaction with IRS1, SHC1 and STAT5B; that stretch reads NPEY. Position 1000 is a phosphotyrosine; by autocatalysis (Tyr1000). Residues 1024 to 1299 enclose the Protein kinase domain; it reads ITLLRELGQG…LLKDDLHPSF (276 aa). Positions 1034 and 1058 each coordinate ATP. Lys1080 participates in a covalent cross-link: Glycyl lysine isopeptide (Lys-Gly) (interchain with G-Cter in ubiquitin). Position 1084 is an S-nitrosocysteine (Cys1084). ATP is bound at residue 1105–1111; the sequence is ELMAHGD. The Proton donor/acceptor role is filled by Asp1160. ATP-binding positions include 1164 to 1165 and Asp1178; that span reads RN. Residues Tyr1186, Tyr1190, Tyr1191, Tyr1356, and Tyr1362 each carry the phosphotyrosine; by autocatalysis modification. The segment at 1361 to 1383 is disordered; sequence PYTHMNGGKKNGRVLTLPRSNPS. The tract at residues 1362–1365 is PIK3R1 binding; that stretch reads YTHM.

It belongs to the protein kinase superfamily. Tyr protein kinase family. Insulin receptor subfamily. In terms of assembly, tetramer of 2 alpha and 2 beta chains linked by disulfide bonds. The alpha chains carry the insulin-binding regions, while the beta chains carry the kinase domain. Forms a hybrid receptor with IGF1R, the hybrid is a tetramer consisting of 1 alpha chain and 1 beta chain of INSR and 1 alpha chain and 1 beta chain of IGF1R. Interacts with SORBS1 but dissociates from it following insulin stimulation. Binds SH2B2. Activated form of INSR interacts (via Tyr-1000) with the PTB/PID domains of IRS1 and SHC1. The sequences surrounding the phosphorylated NPXY motif contribute differentially to either IRS1 or SHC1 recognition. Interacts (via tyrosines in the C-terminus) with IRS2 (via PTB domain and 591-786 AA); the 591-786 would be the primary anchor of IRS2 to INSR while the PTB domain would have a stabilizing action on the interaction with INSR. Interacts with the SH2 domains of the 85 kDa regulatory subunit of PI3K (PIK3R1) in vitro, when autophosphorylated on tyrosine residues. Interacts with SOCS7. Interacts (via the phosphorylated Tyr-1000), with SOCS3. Interacts (via the phosphorylated Tyr-1186, Tyr-1190, Tyr-1191) with SOCS1. Interacts with ARRB2. Interacts with GRB10; this interaction blocks the association between IRS1/IRS2 and INSR, significantly reduces insulin-stimulated tyrosine phosphorylation of IRS1 and IRS2 and thus decreases insulin signaling. Interacts with PDPK1. Interacts (via Tyr-1191) with GRB14 (via BPS domain); this interaction protects the tyrosines in the activation loop from dephosphorylation, but promotes dephosphorylation of Tyr-1000, this results in decreased interaction with, and phosphorylation of, IRS1. Interacts (via subunit alpha) with ENPP1 (via 485-599 AA); this interaction blocks autophosphorylation. Interacts with PTPRE; this interaction is dependent of Tyr-1186, Tyr-1190 and Tyr-1191 of the INSR. Interacts with STAT5B (via SH2 domain). Interacts with PTPRF. Interacts with GRB7. Interacts with CAV2 (tyrosine-phosphorylated form); the interaction is increased with 'Tyr-27'phosphorylation of CAV2. Interacts with ATIC; ATIC together with PRKAA2/AMPK2 and HACD3/PTPLAD1 is proposed to be part of a signaling netwok regulating INSR autophosphorylation and endocytosis. Interacts with the insulin receptor SORL1; this interaction strongly increases its surface exposure, hence strengthens insulin signal reception. Interacts (tyrosine phosphorylated) with CCDC88A/GIV (via SH2-like region); binding requires autophosphorylation of the Insr C-terminal region. Interacts with GNAI3; the interaction is probably mediated by CCDC88A/GIV. Interacts with LMBRD1. Interacts (in response to insulin stimulation) with NCK1; this interaction may recruit PTPN1 to mediate INSR dephosphorylation. Interacts with CD248; this interaction diminishes INSR autophosphorylation. Post-translationally, after being transported from the endoplasmic reticulum to the Golgi apparatus, the single glycosylated precursor is further glycosylated and then cleaved, followed by its transport to the plasma membrane. In terms of processing, autophosphorylated on tyrosine residues in response to insulin. Phosphorylation of Tyr-1000 is required for binding to IRS1, SHC1 and STAT5B. May also be phosphorylated at Tyr-1186 and Tyr-1191 by mTORC2. Dephosphorylated by PTPRE at Tyr-1000, Tyr-1186, Tyr-1190 and Tyr-1191. Dephosphorylated by PTPRF and PTPN1. Dephosphorylated by PTPN2; down-regulates insulin-induced signaling. S-nitrosylation at Cys-1084 by BLVRB inhibits the receptor tyrosine kinase, thereby inhibiting insulin signaling. Post-translationally, ubiquitinated by MARCHF1; leading to degradation thereby reducing surface INSR expression.

It is found in the cell membrane. The protein resides in the late endosome. Its subcellular location is the lysosome. The catalysed reaction is L-tyrosyl-[protein] + ATP = O-phospho-L-tyrosyl-[protein] + ADP + H(+). With respect to regulation, activated in response to insulin. Autophosphorylation activates the kinase activity. PTPN1, PTPRE and PTPRF dephosphorylate important tyrosine residues, thereby reducing INSR activity. Inhibited by ENPP1. GRB10 and GRB14 inhibit the catalytic activity of the INSR, they block access of substrates to the activated receptor. SOCS1 and SOCS3 act as negative regulators of INSR activity, they bind to the activated INRS and interfere with the phosphorylation of INSR substrates. Its function is as follows. Receptor tyrosine kinase which mediates the pleiotropic actions of insulin. Binding of insulin leads to phosphorylation of several intracellular substrates, including, insulin receptor substrates (IRS1, 2, 3, 4), SHC, GAB1, CBL and other signaling intermediates. Each of these phosphorylated proteins serve as docking proteins for other signaling proteins that contain Src-homology-2 domains (SH2 domain) that specifically recognize different phosphotyrosine residues, including the p85 regulatory subunit of PI3K and SHP2. Phosphorylation of IRSs proteins lead to the activation of two main signaling pathways: the PI3K-AKT/PKB pathway, which is responsible for most of the metabolic actions of insulin, and the Ras-MAPK pathway, which regulates expression of some genes and cooperates with the PI3K pathway to control cell growth and differentiation. Binding of the SH2 domains of PI3K to phosphotyrosines on IRS1 leads to the activation of PI3K and the generation of phosphatidylinositol-(3, 4, 5)-triphosphate (PIP3), a lipid second messenger, which activates several PIP3-dependent serine/threonine kinases, such as PDPK1 and subsequently AKT/PKB. The net effect of this pathway is to produce a translocation of the glucose transporter SLC2A4/GLUT4 from cytoplasmic vesicles to the cell membrane to facilitate glucose transport. Moreover, upon insulin stimulation, activated AKT/PKB is responsible for: anti-apoptotic effect of insulin by inducing phosphorylation of BAD; regulates the expression of gluconeogenic and lipogenic enzymes by controlling the activity of the winged helix or forkhead (FOX) class of transcription factors. Another pathway regulated by PI3K-AKT/PKB activation is mTORC1 signaling pathway which regulates cell growth and metabolism and integrates signals from insulin. AKT mediates insulin-stimulated protein synthesis by phosphorylating TSC2 thereby activating mTORC1 pathway. The Ras/RAF/MAP2K/MAPK pathway is mainly involved in mediating cell growth, survival and cellular differentiation of insulin. Phosphorylated IRS1 recruits GRB2/SOS complex, which triggers the activation of the Ras/RAF/MAP2K/MAPK pathway. In addition to binding insulin, the insulin receptor can bind insulin-like growth factors (IGFI and IGFII). When present in a hybrid receptor with IGF1R, binds IGF1. In adipocytes, inhibits lipolysis. This is Insulin receptor (Insr) from Rattus norvegicus (Rat).